Reading from the N-terminus, the 667-residue chain is Fatty acyl-CoA synthetase A (667 aa).

It belongs to the ATP-dependent AMP-binding enzyme family.

The protein resides in the endosome membrane. The catalysed reaction is a long-chain fatty acid + ATP + CoA = a long-chain fatty acyl-CoA + AMP + diphosphate. Its function is as follows. Long chain fatty acid acyl-CoA synthetases catalyze the formation of a thiester bond between a free fatty acid and coenzyme A during fatty acid metabolic process. May mediate fatty acid retrieval from the lumen of endosomes into the cytoplasm. The polypeptide is Fatty acyl-CoA synthetase A (fcsA) (Dictyostelium discoideum (Social amoeba)).